Consider the following 380-residue polypeptide: mRNA cap guanine-N(7) methyltransferase (380 aa).

The mRNA cap 0 methyltransferase domain occupies 24-333 (SRIFFMRNMN…MYLVFGFRKK (310 aa)). Residue 33 to 34 (NN) coordinates mRNA. S-adenosyl-L-methionine contacts are provided by K37, A62, D84, D117, Q139, and Y144. The disordered stretch occupies residues 336-380 (EAEKTEEEPATTKPVAESESEQKEVTESEEKEDQEDCEHQEAQTN).

This sequence belongs to the class I-like SAM-binding methyltransferase superfamily. mRNA cap 0 methyltransferase family.

It is found in the nucleus. The catalysed reaction is a 5'-end (5'-triphosphoguanosine)-ribonucleoside in mRNA + S-adenosyl-L-methionine = a 5'-end (N(7)-methyl 5'-triphosphoguanosine)-ribonucleoside in mRNA + S-adenosyl-L-homocysteine. MRNA-capping methyltransferase that methylates the N7 position of the added guanosine to the 5'-cap structure of mRNAs. Binds RNA containing 5'-terminal GpppC. This chain is mRNA cap guanine-N(7) methyltransferase (tag-72), found in Caenorhabditis elegans.